The sequence spans 1499 residues: Rho GTPase-activating protein 35 (1499 aa).

The tract at residues 1–266 (MMMARKQDVR…IPYFEALKQQ (266 aa)) is has GTPase activity, required for proper localization. GTP is bound by residues Lys28, 33–37 (IGKSC), Leu52, Ser56, 95–97 (EQT), 201–203 (KCD), and 229–231 (SAR). FF domains follow at residues 270 to 327 (IATA…HIHR), 368 to 422 (KLLE…HLEK), 429 to 483 (RAEM…HQKQ), and 485 to 550 (IDRA…HIHF). Tyr308 carries the phosphotyrosine modification. Ser589 is modified (phosphoserine). Positions 592–767 (DPNIDRINLV…LLDSKRNLNL (176 aa)) constitute a pG1 pseudoGTPase domain. A phosphoserine mark is found at Ser770 and Ser773. Positions 783–947 (RIVMCLMCGD…FKDVVEKKNI (165 aa)) constitute a pG2 pseudoGTPase domain. Residues Ser970, Ser975, Ser985, and Ser1072 each carry the phosphoserine modification. Tyr1087 bears the Phosphotyrosine mark. The residue at position 1105 (Tyr1105) is a Phosphotyrosine; by ABL2 and PTK6. Residues 1124-1141 (KAQSNGSGNGSDSEMDTS) are compositionally biased toward polar residues. Positions 1124-1148 (KAQSNGSGNGSDSEMDTSSLERGRK) are disordered. Residues Ser1134, Ser1142, Ser1150, Ser1176, Ser1179, and Ser1221 each carry the phosphoserine modification. A disordered region spans residues 1177–1207 (VGSDDELGPIRKKEEDQASQGYKGDNAVIPY). Residues 1213-1236 (PRRRNILRSLRRNTKKPKPKPRPS) form a required for phospholipid binding and regulation of the substrate preference region. Thr1226 bears the Phosphothreonine mark. Position 1236 is a phosphoserine (Ser1236). One can recognise a Rho-GAP domain in the interval 1249-1436 (VPLTTVVTPE…LFIQQCPFFF (188 aa)). The segment at 1446–1499 (GAAPGSPSAMAPTVPFLTSTPATSQPSPPQSPPPTPQSPMQPLLSSQLQAEHTL) is disordered. Positions 1448 to 1470 (APGSPSAMAPTVPFLTSTPATSQ) are enriched in low complexity. Positions 1471-1484 (PSPPQSPPPTPQSP) are enriched in pro residues. A phosphoserine mark is found at Ser1472 and Ser1476. Thr1480 is subject to Phosphothreonine. Ser1483 is subject to Phosphoserine. The span at 1485–1499 (MQPLLSSQLQAEHTL) shows a compositional bias: low complexity.

Interacts with RASA1. Interacts with the general transcription factor GTF2I, the interaction sequesters GTF2I in the cytoplasm. In terms of processing, phosphorylation of Tyr-1105 by PTK6 promotes the association with RASA1, inactivating RHOA while activating RAS. Phosphorylation at Tyr-308 by PDGFRA inhibits binding to GTF2I. Phosphorylated by PRKCA at Ser-1221 and Thr-1226, induces relocalization from the cytoplasm to regions of plasma membrane ruffling and prevents the binding and substrate specificity regulation by phospholipids. In brain, phosphorylated by FYN and SRC. During focal adhesion formation, phosphorylated by MAPK1 and MAPK3 at the C-terminal region, probably at Ser-1451, Ser-1476, Thr-1480 and Ser-1483. Phosphorylation by MAPK1 and MAPK3 inhibits GAP function and localizes ARGHAP35 away from newly forming focal adhesions and stress fibers in cells spreading on fibronectin. Phosphorylation at Ser-1476 and Thr-1480 by GSK3B requires priming by MAPK and inhibits RhoGAP activity and modulates polarized cell migration. Ubiquitously expressed.

Its subcellular location is the cytoplasm. The protein resides in the cytoskeleton. It localises to the cilium basal body. It is found in the nucleus. The protein localises to the cell membrane. In terms of biological role, rho GTPase-activating protein (GAP). Binds several acidic phospholipids which inhibits the Rho GAP activity to promote the Rac GAP activity. This binding is inhibited by phosphorylation by PRKCA. Involved in cell differentiation as well as cell adhesion and migration, plays an important role in retinal tissue morphogenesis, neural tube fusion, midline fusion of the cerebral hemispheres and mammary gland branching morphogenesis. Transduces signals from p21-ras to the nucleus, acting via the ras GTPase-activating protein (GAP). Transduces SRC-dependent signals from cell-surface adhesion molecules, such as laminin, to promote neurite outgrowth. Regulates axon outgrowth, guidance and fasciculation. Modulates Rho GTPase-dependent F-actin polymerization, organization and assembly, is involved in polarized cell migration and in the positive regulation of ciliogenesis and cilia elongation. During mammary gland development, is required in both the epithelial and stromal compartments for ductal outgrowth. Represses transcription of the glucocorticoid receptor by binding to the cis-acting regulatory sequence 5'-GAGAAAAGAAACTGGAGAAACTC-3'; this function is however unclear and would need additional experimental evidences. This Rattus norvegicus (Rat) protein is Rho GTPase-activating protein 35.